The chain runs to 556 residues: Glutamine--tRNA ligase (556 aa).

A 'HIGH' region motif is present at residues 34–44 (PEPNGYLHIGH). ATP-binding positions include 35 to 37 (EPN) and 41 to 47 (HIGHAKS). Aspartate 67 and tyrosine 212 together coordinate L-glutamine. Residues threonine 231, 261–262 (RL), and 269–271 (MSK) each bind ATP. The short motif at 268-272 (VMSKR) is the 'KMSKS' region element.

The protein belongs to the class-I aminoacyl-tRNA synthetase family. As to quaternary structure, monomer.

The protein resides in the cytoplasm. It carries out the reaction tRNA(Gln) + L-glutamine + ATP = L-glutaminyl-tRNA(Gln) + AMP + diphosphate. The protein is Glutamine--tRNA ligase of Vibrio campbellii (strain ATCC BAA-1116).